The chain runs to 535 residues: KNR4/SMI1 homolog (535 aa).

Residues 354 to 363 (ERKLPEEPKR) show a composition bias toward basic and acidic residues. Residues 354–535 (ERKLPEEPKR…LKDDFENVAL (182 aa)) are disordered. Composition is skewed to polar residues over residues 364–384 (TVSS…QETA), 397–407 (TSLSVDNTGTK), and 456–469 (ESTN…TSQE). Positions 474–483 (TSEKPEEKPK) are enriched in basic and acidic residues. A compositionally biased stretch (basic residues) spans 484–494 (KQSKKASKKKG). Composition is skewed to basic and acidic residues over residues 495-509 (KKDE…TKEP) and 524-535 (EKLKDDFENVAL).

The protein belongs to the KNR4/SMI1 family.

This Kluyveromyces lactis (strain ATCC 8585 / CBS 2359 / DSM 70799 / NBRC 1267 / NRRL Y-1140 / WM37) (Yeast) protein is KNR4/SMI1 homolog.